We begin with the raw amino-acid sequence, 210 residues long: RNA chaperone ProQ (210 aa).

The segment covering 98–127 (HAKASLEESKAKVAARRKEQAKKAREEAKA) has biased composition (basic and acidic residues). Residues 98–155 (HAKASLEESKAKVAARRKEQAKKAREEAKAKKPARATTPPKRRPQPAAVAKKQEKPVE) are disordered.

This sequence belongs to the ProQ family.

The protein localises to the cytoplasm. In terms of biological role, RNA chaperone with significant RNA binding, RNA strand exchange and RNA duplexing activities. In Aliivibrio salmonicida (strain LFI1238) (Vibrio salmonicida (strain LFI1238)), this protein is RNA chaperone ProQ.